Reading from the N-terminus, the 211-residue chain is MLERIANIQKKLSKSIVERKINEVRKVAAVDVSYKEEKARAALVITTFPEGEVLKTKVIETTVSFPYIPTFFFLRETKPILIATKGETFDVLIVEGHGKAHPRGYGLASHIGVVLRKPTIGVAKRLLKNTPKDTYKKVGKVYVSVGNLITLEDATKIIRAILDESGYPKPLKLADKLSKGRIYEVKNTPSPNRSRKKRGNRGKDNNNSQGN.

The Mg(2+) site is built by Asp-31 and Glu-95. A disordered region spans residues 182 to 211 (IYEVKNTPSPNRSRKKRGNRGKDNNNSQGN).

This sequence belongs to the endonuclease V family. The cofactor is Mg(2+).

It is found in the cytoplasm. It carries out the reaction Endonucleolytic cleavage at apurinic or apyrimidinic sites to products with a 5'-phosphate.. In terms of biological role, DNA repair enzyme involved in the repair of deaminated bases. Selectively cleaves double-stranded DNA at the second phosphodiester bond 3' to a deoxyinosine leaving behind the intact lesion on the nicked DNA. In Pyrococcus horikoshii (strain ATCC 700860 / DSM 12428 / JCM 9974 / NBRC 100139 / OT-3), this protein is Endonuclease V.